We begin with the raw amino-acid sequence, 325 residues long: NADH-quinone oxidoreductase subunit H (325 aa).

8 helical membrane passes run 11–31, 81–101, 114–134, 154–174, 186–206, 237–257, 265–285, and 304–324; these read ILLSILKAVVILLVVVTCGAF, VIFTLAPMIAFTSLLLAFAIV, IGILFFLMMAGLAVYAVLFAG, LSYEVFLGLSLMGVVAQAGSF, IWNVIPQFFGFVTFAIAGVAV, FFVGEYIGIVTISALMVTLFF, LPPFIWFALKTAFFMMMFILI, and VCLPLTLVNLLVTAAVILWQA.

This sequence belongs to the complex I subunit 1 family. As to quaternary structure, NDH-1 is composed of 13 different subunits. Subunits NuoA, H, J, K, L, M, N constitute the membrane sector of the complex.

Its subcellular location is the cell inner membrane. It carries out the reaction a quinone + NADH + 5 H(+)(in) = a quinol + NAD(+) + 4 H(+)(out). In terms of biological role, NDH-1 shuttles electrons from NADH, via FMN and iron-sulfur (Fe-S) centers, to quinones in the respiratory chain. The immediate electron acceptor for the enzyme in this species is believed to be ubiquinone. Couples the redox reaction to proton translocation (for every two electrons transferred, four hydrogen ions are translocated across the cytoplasmic membrane), and thus conserves the redox energy in a proton gradient. This subunit may bind ubiquinone. In Enterobacter sp. (strain 638), this protein is NADH-quinone oxidoreductase subunit H.